Here is a 413-residue protein sequence, read N- to C-terminus: Serine hydroxymethyltransferase (413 aa).

Residues Leu-120 and Gly-124–Leu-126 contribute to the (6S)-5,6,7,8-tetrahydrofolate site. At Lys-229 the chain carries N6-(pyridoxal phosphate)lysine. Residue Ser-352 to Phe-354 coordinates (6S)-5,6,7,8-tetrahydrofolate.

This sequence belongs to the SHMT family. In terms of assembly, homodimer. The cofactor is pyridoxal 5'-phosphate.

It localises to the cytoplasm. It catalyses the reaction (6R)-5,10-methylene-5,6,7,8-tetrahydrofolate + glycine + H2O = (6S)-5,6,7,8-tetrahydrofolate + L-serine. The protein operates within one-carbon metabolism; tetrahydrofolate interconversion. It participates in amino-acid biosynthesis; glycine biosynthesis; glycine from L-serine: step 1/1. In terms of biological role, catalyzes the reversible interconversion of serine and glycine with tetrahydrofolate (THF) serving as the one-carbon carrier. This reaction serves as the major source of one-carbon groups required for the biosynthesis of purines, thymidylate, methionine, and other important biomolecules. Also exhibits THF-independent aldolase activity toward beta-hydroxyamino acids, producing glycine and aldehydes, via a retro-aldol mechanism. The polypeptide is Serine hydroxymethyltransferase (Heliobacterium modesticaldum (strain ATCC 51547 / Ice1)).